Reading from the N-terminus, the 750-residue chain is Dual specificity tyrosine-phosphorylation-regulated kinase 1A (750 aa).

2 disordered regions span residues 56-81 and 104-129; these read ALPY…RDPA and YAKK…KVYN. A Bipartite nuclear localization signal motif is present at residues 109–126; it reads RRHQQGQGDDSSHKKERK. The 321-residue stretch at 151 to 471 folds into the Protein kinase domain; the sequence is YEIDSLIGKG…PYYALQHSFF (321 aa). ATP contacts are provided by residues 157 to 165, K180, and 230 to 233; these read IGKGSFGQV and FEML. D279 acts as the Proton acceptor in catalysis. Disordered stretches follow at residues 400-434, 477-531, 583-666, and 731-750; these read TKDG…AGES, EGTN…RHSG, SQKN…GNQA, and DRED…VASS. Polar residues predominate over residues 477–493; it reads EGTNTSNSVSTSPAMEQ. Over residues 494–517 the composition is skewed to low complexity; it reads SQSSGTTSSTSSSSGGSSGTSNSG. The interval 584-612 is histidine-rich domain (HRD); that stretch reads QKNVPHHHGNGSHHHHHHHHHHHGQHILS. Residues 587-608 are compositionally biased toward basic residues; the sequence is VPHHHGNGSHHHHHHHHHHHGQ. The segment covering 610 to 621 has biased composition (polar residues); sequence ILSNRTRTRIYN. Over residues 622–659 the composition is skewed to low complexity; it reads SPSTSSSTQDSMDIGNSHHSMTSLSSSTTSSSTSSSST. Over residues 741-750 the composition is skewed to polar residues; the sequence is CVQQSPVASS.

The protein belongs to the protein kinase superfamily. CMGC Ser/Thr protein kinase family. MNB/DYRK subfamily. In terms of processing, autophosphorylated on tyrosine residues.

The protein localises to the nucleus. It localises to the nucleus speckle. The enzyme catalyses L-seryl-[protein] + ATP = O-phospho-L-seryl-[protein] + ADP + H(+). It catalyses the reaction L-threonyl-[protein] + ATP = O-phospho-L-threonyl-[protein] + ADP + H(+). The catalysed reaction is L-tyrosyl-[protein] + ATP = O-phospho-L-tyrosyl-[protein] + ADP + H(+). It carries out the reaction [DNA-directed RNA polymerase] + ATP = phospho-[DNA-directed RNA polymerase] + ADP + H(+). Functionally, dual-specificity kinase which possesses both serine/threonine and tyrosine kinase activities. Exhibits a substrate preference for proline at position P+1 and arginine at position P-3. Plays an important role in double-strand breaks (DSBs) repair following DNA damage. Mechanistically, phosphorylates RNF169 and increases its ability to block accumulation of TP53BP1 at the DSB sites thereby promoting homologous recombination repair (HRR). Also acts as a positive regulator of transcription by acting as a CTD kinase that mediates phosphorylation of the CTD (C-terminal domain) of the large subunit of RNA polymerase II (RNAP II) POLR2A. Modulates alternative splicing by phosphorylating the splice factor SRSF6. Phosphorylates SEPTIN4, SEPTIN5 and SF3B1. The chain is Dual specificity tyrosine-phosphorylation-regulated kinase 1A from Xenopus laevis (African clawed frog).